Reading from the N-terminus, the 211-residue chain is Middle transcription regulatory protein motA (211 aa).

The segment at residues 23-42 is a DNA-binding region (H-T-H motif); the sequence is LITIAKKDFITAAEVREVHP.

Required for the transcriptional activation of middle promoters. Middle promoters are characterized by the presence of the conserved sequence [AT]3TGCTTNA (MotA box). MotA binds directly to MotA boxes. The polypeptide is Middle transcription regulatory protein motA (motA) (Enterobacteria phage T4 (Bacteriophage T4)).